Consider the following 316-residue polypeptide: MEKALHRISSMNAALPDISLTDAAPGRRPLEWVGMQGIDLPVVVAEPGCRRDVHARADVQVDLPAPQVKGIHMSRLYGLLDGLADGEALSPAGLQRMLRAMVDSHRDCETRSARVRLRFDLLARRTALVTEGLAGWKAYPVRLDATLAGDAFALRAQVTVVYSSTCPCSAALSRHWIEQAFLTAFGHEARVEPTAVAAWLKRHAMAATPHSQRSEAVVSVALPADGTTLGLLDLIDRVEQALGTPVQTAVKRADEQAFAVLNGGNLMFVEDAARRVQAALEDRHASPRVRVRHLESLHPHDAVAWAAPLREGADAC.

Belongs to the GTP cyclohydrolase IV family.

It catalyses the reaction GTP + H2O = 7,8-dihydroneopterin 3'-triphosphate + formate + H(+). It participates in cofactor biosynthesis; 7,8-dihydroneopterin triphosphate biosynthesis; 7,8-dihydroneopterin triphosphate from GTP: step 1/1. Its function is as follows. Converts GTP to 7,8-dihydroneopterin triphosphate. This Burkholderia orbicola (strain AU 1054) protein is GTP cyclohydrolase FolE2 1.